A 482-amino-acid chain; its full sequence is Auxin transporter-like protein 4 (482 aa).

Residues 1–59 (MLSQNQAEEAIVTNMNETEQEGGSSLEEIAEDQSMFNFKSFLWHGGSVWDAWFSCASNQ) lie on the Cytoplasmic side of the membrane. The chain crosses the membrane as a helical span at residues 60–77 (VAQVLLTLPYSFSQLGMV). At 78–79 (SG) the chain is on the extracellular side. Residues 80 to 100 (IVFQIFYGLIGSWTAYLISVL) traverse the membrane as a helical segment. Residues 101-135 (YVEYRARKEKENVNFKNHVIQWFEVLDGLLGRYWK) are Cytoplasmic-facing. The helical transmembrane segment at 136–156 (ALGLAFNCTFLLFGSVIQLIA) threads the bilayer. Residues 157–172 (CASNIYYINDKLDKRT) are Extracellular-facing. The chain crosses the membrane as a helical span at residues 173–193 (WTYIFGACCATTVFIPSFHNY). Residues 194 to 196 (RIW) lie on the Cytoplasmic side of the membrane. The chain crosses the membrane as a helical span at residues 197–217 (SFLGLGMTTYTAWYMAIAAIV). The Extracellular segment spans residues 218 to 232 (NGQIENVVHSGPTKL). Residues 233–253 (VLYFTGATNILYTFGGHAVTV) traverse the membrane as a helical segment. Over 254 to 266 (EIMHAMWKPQKFK) the chain is Cytoplasmic. A helical membrane pass occupies residues 267–287 (YIYFLATLYVFTLTIPSAVAV). Residues 288–314 (YWAFGDELLNHSNAFSLLPKNGFRDAA) are Extracellular-facing. A glycan (N-linked (GlcNAc...) asparagine) is linked at Asn297. A helical transmembrane segment spans residues 315–335 (VILMLIHQFITFGFACTPLYF). The Cytoplasmic portion of the chain corresponds to 336 to 356 (VWEKVIGMHDTKSICLRALVR). The helical transmembrane segment at 357–377 (LPVVIPIWFLAIIFPFFGPIN) threads the bilayer. Residue Ser378 is a topological domain, extracellular. Residues 379–399 (AVGALLVTFTVYIIPALAHML) form a helical membrane-spanning segment. Over 400–422 (TYRTASARKNAVEKPPSFLPSWT) the chain is Cytoplasmic. Residues 423–443 (AVYVLNAFIVVWVLVVGFGFG) form a helical membrane-spanning segment. Residues 444–482 (GWASMTNFIRQIDTFGLFAKCYQCKPPTPPQAPSPHARH) lie on the Extracellular side of the membrane.

Belongs to the amino acid/polyamine transporter 2 family. Amino acid/auxin permease (AAAP) (TC 2.A.18.1) subfamily. As to expression, shoots and roots of nodulating plants, at low levels.

Its subcellular location is the cell membrane. Its function is as follows. Carrier protein involved in proton-driven auxin influx. Mediates the formation of auxin gradient from developing leaves (site of auxin biosynthesis) to tips by contributing to the loading of auxin in vascular tissues and facilitating acropetal (base to tip) auxin transport within inner tissues of the root apex, and basipetal (tip to base) auxin transport within outer tissues of the root apex. May be involved in lateral roots and nodules formation. This Medicago truncatula (Barrel medic) protein is Auxin transporter-like protein 4 (LAX4).